The chain runs to 320 residues: Biotin synthase 2 (320 aa).

The region spanning 34-261 is the Radical SAM core domain; it reads NVVQCSKLLS…ASYVRLSAGR (228 aa). [4Fe-4S] cluster-binding residues include Cys-49, Cys-53, and Cys-56. 4 residues coordinate [2Fe-2S] cluster: Cys-93, Cys-124, Cys-184, and Arg-256.

Belongs to the radical SAM superfamily. Biotin synthase family. Homodimer. It depends on [4Fe-4S] cluster as a cofactor. [2Fe-2S] cluster is required as a cofactor.

The enzyme catalyses (4R,5S)-dethiobiotin + (sulfur carrier)-SH + 2 reduced [2Fe-2S]-[ferredoxin] + 2 S-adenosyl-L-methionine = (sulfur carrier)-H + biotin + 2 5'-deoxyadenosine + 2 L-methionine + 2 oxidized [2Fe-2S]-[ferredoxin]. The protein operates within cofactor biosynthesis; biotin biosynthesis; biotin from 7,8-diaminononanoate: step 2/2. Functionally, catalyzes the conversion of dethiobiotin (DTB) to biotin by the insertion of a sulfur atom into dethiobiotin via a radical-based mechanism. The chain is Biotin synthase 2 from Paracoccus denitrificans (strain Pd 1222).